The chain runs to 693 residues: TGF-beta-activated kinase 1 and MAP3K7-binding protein 2 (693 aa).

A CUE domain is found at 8–51; that stretch reads IDFQVLHDLRQKFPEVPEVVVSRCMLQNNNNLDACCAVLSQEST. The segment at 91-130 is disordered; sequence GREGSRMNGSRTLTHSISDGQLQGGQSNSELFQQEPQTAP. The segment covering 97–130 has biased composition (polar residues); the sequence is MNGSRTLTHSISDGQLQGGQSNSELFQQEPQTAP. Arg-173 carries the post-translational modification Asymmetric dimethylarginine. The interval 219-310 is disordered; sequence ITTPGGTTRQ…SGSSQSSAHS (92 aa). Residues 220-231 show a composition bias toward low complexity; that stretch reads TTPGGTTRQTQQ. Positions 232–282 are enriched in polar residues; it reads HSGWVSQFNPMNPQQVYQPSQPGPWTTCPASNPLSHTSSQQPNQQGHQTSH. Positions 286–310 are enriched in low complexity; that stretch reads PISSPTTSQPPTIHSSGSSQSSAHS. Lys-329 is covalently cross-linked (Glycyl lysine isopeptide (Lys-Gly) (interchain with G-Cter in SUMO)). The interval 330 to 381 is disordered; sequence LEPPQRNNSSKLRSSGPRTSSTSSSVNSQTLNRNQPTVYIAASPPNTDELMS. A compositionally biased stretch (low complexity) spans 343-359; the sequence is SSGPRTSSTSSSVNSQT. Ser-372, Ser-450, Ser-482, and Ser-524 each carry phosphoserine. Positions 532–619 form a coiled coil; sequence YTQALLVHQK…TKEIDLFQAR (88 aa). Residue Lys-562 forms a Glycyl lysine isopeptide (Lys-Gly) (interchain with G-Cter in SUMO) linkage. Ser-582 carries the phosphoserine modification. Lys-611 participates in a covalent cross-link: Glycyl lysine isopeptide (Lys-Gly) (interchain with G-Cter in ubiquitin). Residues 642–663 form a disordered region; that stretch reads PPKPKDQRSIIKTPKTQDTEDD. The RanBP2-type zinc finger occupies 663–693; sequence DEGAQWNCTACTFLNHPALIRCEQCEMPRHF. (Microbial infection) S-methylcysteine is present on Cys-673. Residues 675 to 685 form an interaction with polyubiquitin region; sequence FLNHPALIRCE.

As to quaternary structure, interacts with MAP3K7 and TRAF6. Identified in the TRIKA2 complex composed of MAP3K7, TAB1 and TAB2. Binds 'Lys-63'-linked polyubiquitin chains. Interacts with NCOR1 and HDAC3 to form a ternary complex. Interacts (via C-terminal) with NUMBL (via PTB domain). Interacts (via the C-terminus) with DYNC2I2 (via WD domains). Interacts with RBCK1. Interacts with TRIM5. Interacts with TRIM38 (via B30.2/SPRY domain), leading to its translocation to lysosomes and degradation. Interacts with ASB1; this interaction promotes TAB2 stability. Post-translationally, degraded in a lysosome-dependent manner following interaction with TRIM38. In terms of processing, SUMOylated by TRIM60; leading to inhibition of MAPK/NF-kappaB activation and the innate immune response. Ubiquitinated; following IL1 stimulation or TRAF6 overexpression. Ubiquitination involves RBCK1 leading to proteasomal degradation. Ubiquitinated at Lys-611 by TRIM45 leading to proteasomal degradation. Post-translationally, phosphorylated. In terms of processing, (Microbial infection) Methylated at Cys-673 by enteropathogenic E.coli protein NleE or S.flexneri protein OspZ: methylation disrupts zinc-binding and ability to bind 'Lys-63'-linked ubiquitin, leading to NF-kappa-B inactivation. Widely expressed. In the embryo, expressed in the ventricular trabeculae, endothelial cells of the conotruncal cushions of the outflow tract and in the endothelial cells lining the developing aortic valves.

It localises to the membrane. It is found in the endosome membrane. The protein resides in the lysosome membrane. The protein localises to the cytoplasm. Its subcellular location is the cytosol. Functionally, adapter required to activate the JNK and NF-kappa-B signaling pathways through the specific recognition of 'Lys-63'-linked polyubiquitin chains by its RanBP2-type zinc finger (NZF). Acts as an adapter linking MAP3K7/TAK1 and TRAF6 to 'Lys-63'-linked polyubiquitin chains. The RanBP2-type zinc finger (NZF) specifically recognizes Lys-63'-linked polyubiquitin chains unanchored or anchored to the substrate proteins such as RIPK1/RIP1 and RIPK2: this acts as a scaffold to organize a large signaling complex to promote autophosphorylation of MAP3K7/TAK1, and subsequent activation of I-kappa-B-kinase (IKK) core complex by MAP3K7/TAK1. Also recognizes and binds Lys-63'-linked polyubiquitin chains of heterotypic 'Lys-63'-/'Lys-48'-linked branched ubiquitin chains. Regulates the IL1-mediated translocation of NCOR1 out of the nucleus. Involved in heart development. This Homo sapiens (Human) protein is TGF-beta-activated kinase 1 and MAP3K7-binding protein 2.